The chain runs to 441 residues: Membrane-bound protease PH1510 (441 aa).

The first 20 residues, 1-20, serve as a signal peptide directing secretion; that stretch reads MRRILLSMIVLIFLASPILA. 64–67 contributes to the substrate binding site; sequence GGRA. S97 serves as the catalytic Nucleophile. 119 to 124 is a binding site for substrate; it reads ACRPIL. K138 serves as the catalytic Proton donor/acceptor. Transmembrane regions (helical) follow at residues 239 to 259, 271 to 291, 307 to 327, and 344 to 364; these read VAYLLLTLGIWALIIGFLTPG, IILAIIGFGYFGYNSAGILLI, FGLFTVAGLITFIIGGILLFG, and ILIITVGAILAAFFAFGMAAV.

The protein belongs to the peptidase S14 family. In terms of assembly, homodimer.

It is found in the membrane. With respect to regulation, inhibited by divalent metal cations, including Mg(2+), Mn(2+), Ca(2+) and Zn(2+). Mildly inhibited by 0.01 % SDS and 0.1% dodecyl-beta-D-maltoside. Activity is nearly abolished by 1 % SDS. Functionally, protease that cleaves its substrates preferentially near hydrophobic or aromatic amino acid residues. Can degrade casein and the stomatin homolog PH1511 (in vitro). This Pyrococcus horikoshii (strain ATCC 700860 / DSM 12428 / JCM 9974 / NBRC 100139 / OT-3) protein is Membrane-bound protease PH1510.